A 529-amino-acid chain; its full sequence is Peptide chain release factor 3 (529 aa).

The tr-type G domain maps to 11–280 (AKRRTFAIIS…GLVAWAPAPM (270 aa)). Residues 20–27 (SHPDAGKT), 88–92 (DTPGH), and 142–145 (NKLD) each bind GTP.

This sequence belongs to the TRAFAC class translation factor GTPase superfamily. Classic translation factor GTPase family. PrfC subfamily.

The protein resides in the cytoplasm. In terms of biological role, increases the formation of ribosomal termination complexes and stimulates activities of RF-1 and RF-2. It binds guanine nucleotides and has strong preference for UGA stop codons. It may interact directly with the ribosome. The stimulation of RF-1 and RF-2 is significantly reduced by GTP and GDP, but not by GMP. The sequence is that of Peptide chain release factor 3 from Edwardsiella ictaluri (strain 93-146).